Consider the following 468-residue polypeptide: 6-phospho-beta-galactosidase (468 aa).

D-galactose 6-phosphate-binding residues include Gln-19, His-116, Asn-159, Glu-160, and Asn-297. Residue Glu-160 is the Proton donor of the active site. The Nucleophile role is filled by Glu-375. 4 residues coordinate D-galactose 6-phosphate: Ser-428, Trp-429, Lys-435, and Tyr-437.

It belongs to the glycosyl hydrolase 1 family.

The enzyme catalyses a 6-phospho-beta-D-galactoside + H2O = D-galactose 6-phosphate + an alcohol. It participates in carbohydrate metabolism; lactose degradation; D-galactose 6-phosphate and beta-D-glucose from lactose 6-phosphate: step 1/1. This is 6-phospho-beta-galactosidase from Streptococcus pyogenes serotype M1.